The sequence spans 258 residues: Imidazole glycerol phosphate synthase subunit HisF (258 aa).

Catalysis depends on residues Asp11 and Asp130.

This sequence belongs to the HisA/HisF family. Heterodimer of HisH and HisF.

The protein resides in the cytoplasm. The catalysed reaction is 5-[(5-phospho-1-deoxy-D-ribulos-1-ylimino)methylamino]-1-(5-phospho-beta-D-ribosyl)imidazole-4-carboxamide + L-glutamine = D-erythro-1-(imidazol-4-yl)glycerol 3-phosphate + 5-amino-1-(5-phospho-beta-D-ribosyl)imidazole-4-carboxamide + L-glutamate + H(+). It participates in amino-acid biosynthesis; L-histidine biosynthesis; L-histidine from 5-phospho-alpha-D-ribose 1-diphosphate: step 5/9. IGPS catalyzes the conversion of PRFAR and glutamine to IGP, AICAR and glutamate. The HisF subunit catalyzes the cyclization activity that produces IGP and AICAR from PRFAR using the ammonia provided by the HisH subunit. The polypeptide is Imidazole glycerol phosphate synthase subunit HisF (Shigella boydii serotype 4 (strain Sb227)).